The chain runs to 918 residues: Serine/threonine-protein kinase D1 (918 aa).

The residue at position 93 (Y93) is a Phosphotyrosine. The Phorbol-ester/DAG-type 1 zinc-finger motif lies at 144 to 194 (PHALFVHSYRAPAFCDHCGEMLWGLVRQGLKCEGCGLNYHKRCAFKIPNNC). 4 positions are modified to phosphoserine: S203, S206, S217, and S221. A Phorbol-ester/DAG-type 2 zinc finger spans residues 276 to 326 (PHTFVIHSYTRPTVCQFCKKLLKGLFRQGLQCKDCRFNCHKRCAPKVPNNC). 2 disordered regions span residues 338–362 (SPGA…NSGL) and 379–410 (AEGQ…SNNI). Over residues 345-355 (VVMEEGSDDND) the composition is skewed to acidic residues. S351 is subject to Phosphoserine. Over residues 400-410 (RTISPSTSNNI) the composition is skewed to polar residues. 2 positions are modified to phosphoserine; by MAPK13: S403 and S407. Positions 428–547 (TVMKEGWMVH…WEVAIQHALM (120 aa)) constitute a PH domain. Residue Y438 is modified to Phosphotyrosine. The residue at position 454 (S454) is a Phosphoserine. Y469 carries the post-translational modification Phosphotyrosine; by ABL. Phosphotyrosine is present on Y508. S554 is modified (phosphoserine). Residues 589-845 (IFPDEVLGSG…VDKTLSHPWL (257 aa)) form the Protein kinase domain. ATP contacts are provided by residues 595-603 (LGSGQFGIV) and K618. Catalysis depends on D712, which acts as the Proton acceptor. Position 744 is a phosphoserine; by PKC/PRKCD (S744). Residue S748 is modified to Phosphoserine; by autocatalysis and PKC/PRKCD. Phosphotyrosine is present on Y755. At S916 the chain carries Phosphoserine; by autocatalysis.

Belongs to the protein kinase superfamily. CAMK Ser/Thr protein kinase family. PKD subfamily. In terms of assembly, interacts (via N-terminus) with ADAP1/CENTA1. Interacts with MAPK13. Interacts with DAPK1 in an oxidative stress-regulated manner. Interacts with USP28; the interaction induces phosphorylation of USP28 and activated KRAS-mediated stabilization of ZNF304. Interacts with AKAP13 (via C-terminal domain). The cofactor is Mg(2+). Phosphorylated at Ser-403 and Ser-407 by MAPK13 during regulation of insulin secretion in pancreatic beta cells. Phosphorylated by DAPK1. Phosphorylated at Tyr-93 and by ABL at Tyr-469, which primes the kinase in response to oxidative stress, and promotes a second step activating phosphorylation at Ser-744/Ser-748 by PKRD. Phosphorylated at Ser-916 upon S.enterica infection in macrophages.

It is found in the cytoplasm. Its subcellular location is the cell membrane. The protein resides in the golgi apparatus. It localises to the trans-Golgi network. It catalyses the reaction L-seryl-[protein] + ATP = O-phospho-L-seryl-[protein] + ADP + H(+). The catalysed reaction is L-threonyl-[protein] + ATP = O-phospho-L-threonyl-[protein] + ADP + H(+). Activated by DAG and phorbol esters. Phorbol-ester/DAG-type domain 1 binds DAG with high affinity and appears to play the dominant role in mediating translocation to the cell membrane and trans-Golgi network. Phorbol-ester/DAG-type domain 2 binds phorbol ester with higher affinity. Autophosphorylation of Ser-748 and phosphorylation of Ser-744 by PKC relieves auto-inhibition by the PH domain. Phosphorylation on Tyr-469 by the SRC-ABL1 pathway in response to oxidative stress, is also required for activation. Activated by DAPK1 under oxidative stress. In terms of biological role, serine/threonine-protein kinase that converts transient diacylglycerol (DAG) signals into prolonged physiological effects downstream of PKC, and is involved in the regulation of MAPK8/JNK1 and Ras signaling, Golgi membrane integrity and trafficking, cell survival through NF-kappa-B activation, cell migration, cell differentiation by mediating HDAC7 nuclear export, cell proliferation via MAPK1/3 (ERK1/2) signaling, and plays a role in cardiac hypertrophy, VEGFA-induced angiogenesis, genotoxic-induced apoptosis and flagellin-stimulated inflammatory response. Phosphorylates the epidermal growth factor receptor (EGFR) on dual threonine residues, which leads to the suppression of epidermal growth factor (EGF)-induced MAPK8/JNK1 activation and subsequent JUN phosphorylation. Phosphorylates RIN1, inducing RIN1 binding to 14-3-3 proteins YWHAB, YWHAE and YWHAZ and increased competition with RAF1 for binding to GTP-bound form of Ras proteins (NRAS, HRAS and KRAS). Acts downstream of the heterotrimeric G-protein beta/gamma-subunit complex to maintain the structural integrity of the Golgi membranes, and is required for protein transport along the secretory pathway. In the trans-Golgi network (TGN), regulates the fission of transport vesicles that are on their way to the plasma membrane. May act by activating the lipid kinase phosphatidylinositol 4-kinase beta (PI4KB) at the TGN for the local synthesis of phosphorylated inositol lipids, which induces a sequential production of DAG, phosphatidic acid (PA) and lyso-PA (LPA) that are necessary for membrane fission and generation of specific transport carriers to the cell surface. Under oxidative stress, is phosphorylated at Tyr-469 via SRC-ABL1 and contributes to cell survival by activating IKK complex and subsequent nuclear translocation and activation of NFKB1. Involved in cell migration by regulating integrin alpha-5/beta-3 recycling and promoting its recruitment in newly forming focal adhesion. In osteoblast differentiation, mediates the bone morphogenetic protein 2 (BMP2)-induced nuclear export of HDAC7, which results in the inhibition of HDAC7 transcriptional repression of RUNX2. In neurons, plays an important role in neuronal polarity by regulating the biogenesis of TGN-derived dendritic vesicles, and is involved in the maintenance of dendritic arborization and Golgi structure in hippocampal cells. May potentiate mitogenesis induced by the neuropeptide bombesin or vasopressin by mediating an increase in the duration of MAPK1/3 (ERK1/2) signaling, which leads to accumulation of immediate-early gene products including FOS that stimulate cell cycle progression. Plays an important role in the proliferative response induced by low calcium in keratinocytes, through sustained activation of MAPK1/3 (ERK1/2) pathway. Downstream of novel PKC signaling, plays a role in cardiac hypertrophy by phosphorylating HDAC5, which in turn triggers XPO1/CRM1-dependent nuclear export of HDAC5, MEF2A transcriptional activation and induction of downstream target genes that promote myocyte hypertrophy and pathological cardiac remodeling. Mediates cardiac troponin I (TNNI3) phosphorylation at the PKA sites, which results in reduced myofilament calcium sensitivity, and accelerated crossbridge cycling kinetics. The PRKD1-HDAC5 pathway is also involved in angiogenesis by mediating VEGFA-induced specific subset of gene expression, cell migration, and tube formation. In response to VEGFA, is necessary and required for HDAC7 phosphorylation which induces HDAC7 nuclear export and endothelial cell proliferation and migration. During apoptosis induced by cytarabine and other genotoxic agents, PRKD1 is cleaved by caspase-3 at Asp-378, resulting in activation of its kinase function and increased sensitivity of cells to the cytotoxic effects of genotoxic agents. In epithelial cells, is required for transducing flagellin-stimulated inflammatory responses by binding and phosphorylating TLR5, which contributes to MAPK14/p38 activation and production of inflammatory cytokines. Acts as an activator of NLRP3 inflammasome assembly by mediating phosphorylation of NLRP3. May play a role in inflammatory response by mediating activation of NF-kappa-B. May be involved in pain transmission by directly modulating TRPV1 receptor. Plays a role in activated KRAS-mediated stabilization of ZNF304 in colorectal cancer (CRC) cells. Regulates nuclear translocation of transcription factor TFEB in macrophages upon live S.enterica infection. The protein is Serine/threonine-protein kinase D1 (Prkd1) of Mus musculus (Mouse).